Consider the following 118-residue polypeptide: T cell receptor gamma variable 5 (118 aa).

A signal peptide spans 1–17; it reads MRWALLVLLAFLSPASQ. In terms of domain architecture, Ig-like spans 18-118; it reads KSSNLEGGTK…GVYYCATWDR (101 aa). Cys-41 and Cys-113 form a disulfide bridge. Asn-106 carries an N-linked (GlcNAc...) asparagine glycan.

As to quaternary structure, gamma-delta TR is a heterodimer composed of a gamma and delta chain; disulfide-linked. The gamma-delta TR is associated with the transmembrane signaling CD3 coreceptor proteins following the stoichiometry: a single gamma-delta TR heterodimer associates with one CD3D-CD3E heterodimer, one CD3G-CD3E heterodimer and one CD247 homodimer forming a stable octameric structure. Upon activation, gamma-delta TR complex associates with FCER1G to initiate intracellular signaling.

It localises to the cell membrane. In terms of biological role, v region of the variable domain of T cell receptor (TR) gamma chain that participates in the antigen recognition. Gamma-delta TRs recognize a variety of self and foreign non-peptide antigens frequently expressed at the epithelial boundaries between the host and external environment, including endogenous lipids presented by MH-like protein CD1D and phosphoantigens presented by butyrophilin-like molecule BTN3A1. Upon antigen recognition induces rapid, innate-like immune responses involved in pathogen clearance and tissue repair. Binding of gamma-delta TR complex to antigen triggers phosphorylation of immunoreceptor tyrosine-based activation motifs (ITAMs) in the CD3 chains by the LCK and FYN kinases, allowing the recruitment, phosphorylation, and activation of ZAP70 that facilitates phosphorylation of the scaffolding proteins LCP2 and LAT. This lead to the formation of a supramolecular signalosome that recruits the phospholipase PLCG1, resulting in calcium mobilization and ERK activation, ultimately leading to T cell expansion and differentiation into effector cells. Gamma-delta TRs are produced through somatic rearrangement of a limited repertoire of variable (V), diversity (D), and joining (J) genes. The potential diversity of gamma-delta TRs is conferred by the unique ability to rearrange (D) genes in tandem and to utilize all three reading frames. The combinatorial diversity is considerably increased by the sequence exonuclease trimming and random nucleotide (N) region additions which occur during the V-(D)-J rearrangements. The protein is T cell receptor gamma variable 5 of Homo sapiens (Human).